The chain runs to 303 residues: Protein-lysine N-methyltransferase rrg1 (303 aa).

Residues tryptophan 117, 143-145 (GAG), aspartate 165, tryptophan 198, and serine 221 each bind S-adenosyl-L-methionine.

Belongs to the class I-like SAM-binding methyltransferase superfamily. METTL21 family.

It localises to the cytoplasm. It is found in the nucleus. Its function is as follows. S-adenosyl-L-methionine-dependent protein-lysine N-methyltransferase that methylates elongation factor 2 and elongation factor 3A. This Schizosaccharomyces pombe (strain 972 / ATCC 24843) (Fission yeast) protein is Protein-lysine N-methyltransferase rrg1.